The primary structure comprises 60 residues: Large ribosomal subunit protein uL30 (60 aa).

It belongs to the universal ribosomal protein uL30 family. As to quaternary structure, part of the 50S ribosomal subunit.

In Paracidovorax citrulli (strain AAC00-1) (Acidovorax citrulli), this protein is Large ribosomal subunit protein uL30.